The following is a 154-amino-acid chain: Myoglobin (154 aa).

A Globin domain is found at Gly-2–Lys-148. Ser-4 bears the Phosphoserine mark. A nitrite-binding site is contributed by His-65. His-65 lines the O2 pocket. Thr-68 is subject to Phosphothreonine. His-94 contributes to the heme b binding site.

It belongs to the globin family. Monomeric.

The protein localises to the cytoplasm. Its subcellular location is the sarcoplasm. The catalysed reaction is Fe(III)-heme b-[protein] + nitric oxide + H2O = Fe(II)-heme b-[protein] + nitrite + 2 H(+). The enzyme catalyses H2O2 + AH2 = A + 2 H2O. In terms of biological role, monomeric heme protein which primary function is to store oxygen and facilitate its diffusion within muscle tissues. Reversibly binds oxygen through a pentacoordinated heme iron and enables its timely and efficient release as needed during periods of heightened demand. Depending on the oxidative conditions of tissues and cells, and in addition to its ability to bind oxygen, it also has a nitrite reductase activity whereby it regulates the production of bioactive nitric oxide. Under stress conditions, like hypoxia and anoxia, it also protects cells against reactive oxygen species thanks to its pseudoperoxidase activity. In Erythrocebus patas (Red guenon), this protein is Myoglobin (MB).